Consider the following 259-residue polypeptide: Acyl-[acyl-carrier-protein]--UDP-N-acetylglucosamine O-acyltransferase (259 aa).

Belongs to the transferase hexapeptide repeat family. LpxA subfamily. In terms of assembly, homotrimer.

Its subcellular location is the cytoplasm. The catalysed reaction is a (3R)-hydroxyacyl-[ACP] + UDP-N-acetyl-alpha-D-glucosamine = a UDP-3-O-[(3R)-3-hydroxyacyl]-N-acetyl-alpha-D-glucosamine + holo-[ACP]. The protein operates within glycolipid biosynthesis; lipid IV(A) biosynthesis; lipid IV(A) from (3R)-3-hydroxytetradecanoyl-[acyl-carrier-protein] and UDP-N-acetyl-alpha-D-glucosamine: step 1/6. Its function is as follows. Involved in the biosynthesis of lipid A, a phosphorylated glycolipid that anchors the lipopolysaccharide to the outer membrane of the cell. This is Acyl-[acyl-carrier-protein]--UDP-N-acetylglucosamine O-acyltransferase from Psychrobacter arcticus (strain DSM 17307 / VKM B-2377 / 273-4).